The chain runs to 311 residues: Ribonuclease HIII (311 aa).

The RNase H type-2 domain maps to 93–310 (LSAIGSDEVG…TKKALDIAKH (218 aa)). A divalent metal cation is bound by residues D99, E100, and D204.

This sequence belongs to the RNase HII family. RnhC subfamily. Requires Mn(2+) as cofactor. The cofactor is Mg(2+).

Its subcellular location is the cytoplasm. It catalyses the reaction Endonucleolytic cleavage to 5'-phosphomonoester.. Endonuclease that specifically degrades the RNA of RNA-DNA hybrids. This Geobacillus kaustophilus (strain HTA426) protein is Ribonuclease HIII.